A 449-amino-acid chain; its full sequence is Lipase (449 aa).

The N-terminal stretch at Met1 to Ala23 is a signal peptide. The segment at Arg58–Lys77 is disordered. Ser206 functions as the Charge relay system in the catalytic mechanism. The Ca(2+) site is built by Gly318, Asp387, and Asp396. 2 Hemolysin-type calcium-binding repeats span residues Ile372–Ile389 and Glu390–Phe407.

This sequence belongs to the AB hydrolase superfamily. Lipase family.

It carries out the reaction a triacylglycerol + H2O = a diacylglycerol + a fatty acid + H(+). The chain is Lipase from Pseudomonas fluorescens.